Here is a 153-residue protein sequence, read N- to C-terminus: Large ribosomal subunit protein bL27m (153 aa).

Residues 1 to 37 (MINQGLFIRVNNFQLLKASLAYKKASNILTFPPIRTS) constitute a mitochondrion transit peptide. The segment at 34–57 (IRTSTKHGGGSSKNTGDSAGRRLG) is disordered.

It belongs to the bacterial ribosomal protein bL27 family. Component of the mitochondrial large ribosomal subunit (mt-LSU). Mature yeast 74S mitochondrial ribosomes consist of a small (37S) and a large (54S) subunit. The 37S small subunit contains a 15S ribosomal RNA (15S mt-rRNA) and at least 32 different proteins. The 54S large subunit contains a 21S rRNA (21S mt-rRNA) and at least 45 different proteins.

It localises to the mitochondrion. Functionally, component of the mitochondrial ribosome (mitoribosome), a dedicated translation machinery responsible for the synthesis of mitochondrial genome-encoded proteins, including at least some of the essential transmembrane subunits of the mitochondrial respiratory chain. The mitoribosomes are attached to the mitochondrial inner membrane and translation products are cotranslationally integrated into the membrane. The chain is Large ribosomal subunit protein bL27m (mrp7) from Schizosaccharomyces pombe (strain 972 / ATCC 24843) (Fission yeast).